The sequence spans 152 residues: D-aminoacyl-tRNA deacylase (152 aa).

Positions 137-138 (GP) match the Gly-cisPro motif, important for rejection of L-amino acids motif.

The protein belongs to the DTD family. As to quaternary structure, homodimer.

The protein localises to the cytoplasm. The catalysed reaction is glycyl-tRNA(Ala) + H2O = tRNA(Ala) + glycine + H(+). It catalyses the reaction a D-aminoacyl-tRNA + H2O = a tRNA + a D-alpha-amino acid + H(+). Functionally, an aminoacyl-tRNA editing enzyme that deacylates mischarged D-aminoacyl-tRNAs. Also deacylates mischarged glycyl-tRNA(Ala), protecting cells against glycine mischarging by AlaRS. Acts via tRNA-based rather than protein-based catalysis; rejects L-amino acids rather than detecting D-amino acids in the active site. By recycling D-aminoacyl-tRNA to D-amino acids and free tRNA molecules, this enzyme counteracts the toxicity associated with the formation of D-aminoacyl-tRNA entities in vivo and helps enforce protein L-homochirality. The chain is D-aminoacyl-tRNA deacylase from Thermus aquaticus.